Consider the following 218-residue polypeptide: PKHD-type hydroxylase Sala_1910 (218 aa).

The 99-residue stretch at 74–172 folds into the Fe2OG dioxygenase domain; it reads RIAPPLLTRY…RLVAITFIQS (99 aa). Fe cation is bound by residues H92, D94, and H153. R163 provides a ligand contact to 2-oxoglutarate.

Fe(2+) is required as a cofactor. Requires L-ascorbate as cofactor.

In Sphingopyxis alaskensis (strain DSM 13593 / LMG 18877 / RB2256) (Sphingomonas alaskensis), this protein is PKHD-type hydroxylase Sala_1910.